Consider the following 495-residue polypeptide: Germacrene A acid 8-beta-hydroxylase (495 aa).

A helical; Signal-anchor for type II membrane protein membrane pass occupies residues 3 to 23 (PFTTFSLVASSLILLICWALV). Asn-103 carries an N-linked (GlcNAc...) asparagine glycan. Cys-433 contributes to the heme binding site.

It belongs to the cytochrome P450 family. It depends on heme as a cofactor. In terms of tissue distribution, mostly expressed in leaves and flowers, and, to a lower extent, in roots and stems.

The protein localises to the membrane. It carries out the reaction germacra-1(10),4,11(13)-trien-12-oate + reduced [NADPH--hemoprotein reductase] + O2 = 8beta-hydroxygermacra-1(10),4,11(13)-trien-12-oate + oxidized [NADPH--hemoprotein reductase] + H2O + H(+). It catalyses the reaction germacra-1(10),4,11(13)-trien-12-oate + reduced [NADPH--hemoprotein reductase] + O2 = 8-epi-inunolide + oxidized [NADPH--hemoprotein reductase] + 2 H2O. The enzyme catalyses germacra-1(10),4,11(13)-trien-12-oate + reduced [NADPH--hemoprotein reductase] + O2 = 8alpha-hydroxygermacra-1(10),4,11(13)-trien-12-oate + oxidized [NADPH--hemoprotein reductase] + H2O + H(+). It participates in secondary metabolite biosynthesis; terpenoid biosynthesis. Involved in the biosynthesis of germacrene-derived sesquiterpene lactones. Hydroxylates germacrene A acid to 8-beta-hydroxy-germacrene A and 8-alpha-hydroxy-germacrene A acids. Unlike 8-alpha-hydroxy-germacrene A acid with is spontaneously converted into inunolide (12, 8-alpha), 8-beta-hydroxy-germacrene A cannot undergo spontaneous lactonization. The sequence is that of Germacrene A acid 8-beta-hydroxylase from Inula hupehensis (Inula helianthus-aquatilis subsp. hupehensis).